A 277-amino-acid polypeptide reads, in one-letter code: Orotidine 5'-phosphate decarboxylase (277 aa).

Residues aspartate 40, 62–64, 93–102, tyrosine 229, and arginine 247 contribute to the substrate site; these read KTH and DRKFIDIGNT. The Proton donor role is filled by lysine 95.

This sequence belongs to the OMP decarboxylase family.

The catalysed reaction is orotidine 5'-phosphate + H(+) = UMP + CO2. The protein operates within pyrimidine metabolism; UMP biosynthesis via de novo pathway; UMP from orotate: step 2/2. The polypeptide is Orotidine 5'-phosphate decarboxylase (pyrG) (Aspergillus kawachii (White koji mold)).